A 600-amino-acid chain; its full sequence is Probable tripeptidyl-peptidase SED4 (600 aa).

Positions 1 to 22 are cleaved as a signal peptide; sequence MVSFTLRAIGACLIGLPALITA. Residues 23–202 constitute a propeptide, removed in mature form; the sequence is APTSHVSNDF…SVFTSDLEIT (180 aa). N-linked (GlcNAc...) asparagine glycans are attached at residues Asn-210 and Asn-281. Residues 212–600 enclose the Peptidase S53 domain; that stretch reads TITPDCIREL…FEKLSKLVLI (389 aa). Residues Glu-288 and Asp-292 each act as charge relay system in the active site. Asn-323 and Asn-404 each carry an N-linked (GlcNAc...) asparagine glycan. Residue Ser-504 is the Charge relay system of the active site. Residues Asp-546 and Ile-547 each coordinate Ca(2+). Asn-575 is a glycosylation site (N-linked (GlcNAc...) asparagine). Gly-579 and Asp-581 together coordinate Ca(2+).

Ca(2+) serves as cofactor.

The protein localises to the secreted. It localises to the extracellular space. It carries out the reaction Release of an N-terminal tripeptide from a polypeptide.. Secreted tripeptidyl-peptidase which degrades proteins at acidic pHs and is involved in virulence. In Arthroderma benhamiae (strain ATCC MYA-4681 / CBS 112371) (Trichophyton mentagrophytes), this protein is Probable tripeptidyl-peptidase SED4 (SED4).